We begin with the raw amino-acid sequence, 583 residues long: Secretogranin-2b (583 aa).

The signal sequence occupies residues 1 to 28 (MMLSLPKLSAGGVVVLLATLLHTLTVQG). Disordered regions lie at residues 123 to 159 (AGES…AGFV) and 526 to 583 (VDNG…VAGM). The segment covering 534-546 (AKRDTQGKEEPEG) has biased composition (basic and acidic residues).

Belongs to the chromogranin/secretogranin protein family.

Its subcellular location is the secreted. Neuroendocrine protein of the granin family that regulates the biogenesis of secretory granules. Required for neurovascular modeling of the hindbrain. Acts in a non-cell autonomous manner and is required for migration and proliferation of central artery endothelial cells. Required for normal courting behavior and spawning. The chain is Secretogranin-2b from Danio rerio (Zebrafish).